The following is a 201-amino-acid chain: Peptide deformylase (201 aa).

Positions 92 and 134 each coordinate Fe cation. Glu-135 is an active-site residue. Residue His-138 coordinates Fe cation.

Belongs to the polypeptide deformylase family. Fe(2+) is required as a cofactor.

The enzyme catalyses N-terminal N-formyl-L-methionyl-[peptide] + H2O = N-terminal L-methionyl-[peptide] + formate. In terms of biological role, removes the formyl group from the N-terminal Met of newly synthesized proteins. Requires at least a dipeptide for an efficient rate of reaction. N-terminal L-methionine is a prerequisite for activity but the enzyme has broad specificity at other positions. The protein is Peptide deformylase of Rhodopirellula baltica (strain DSM 10527 / NCIMB 13988 / SH1).